Consider the following 162-residue polypeptide: Peptide deformylase-like (162 aa).

Belongs to the polypeptide deformylase family.

The polypeptide is Peptide deformylase-like (Staphylococcus epidermidis (strain ATCC 35984 / DSM 28319 / BCRC 17069 / CCUG 31568 / BM 3577 / RP62A)).